A 414-amino-acid polypeptide reads, in one-letter code: Glutamyl-tRNA reductase (414 aa).

Substrate contacts are provided by residues 49-52, Ser108, 113-115, and Gln119; these read TCNR and EPQ. Cys50 serves as the catalytic Nucleophile. 188-193 contacts NADP(+); that stretch reads GAGQTG.

The protein belongs to the glutamyl-tRNA reductase family. As to quaternary structure, homodimer.

The enzyme catalyses (S)-4-amino-5-oxopentanoate + tRNA(Glu) + NADP(+) = L-glutamyl-tRNA(Glu) + NADPH + H(+). It functions in the pathway porphyrin-containing compound metabolism; protoporphyrin-IX biosynthesis; 5-aminolevulinate from L-glutamyl-tRNA(Glu): step 1/2. In terms of biological role, catalyzes the NADPH-dependent reduction of glutamyl-tRNA(Glu) to glutamate 1-semialdehyde (GSA). The chain is Glutamyl-tRNA reductase from Francisella tularensis subsp. holarctica (strain FTNF002-00 / FTA).